The following is a 326-amino-acid chain: RNA/RNP complex-1-interacting phosphatase (326 aa).

The interval 1–28 is disordered; that stretch reads MNQWHYGRYSRGRDFTARAPPKKKGKNQ. Residues 59–206 form the Tyrosine-protein phosphatase domain; it reads FEAKLMPEEC…LQKRRVRKNQ (148 aa). Cys150 acts as the Phosphocysteine intermediate in catalysis. Substrate is bound at residue 151-156; that stretch reads THGLNR. Catalysis depends on Arg156, which acts as the Proton donor/acceptor. The disordered stretch occupies residues 200 to 258; the sequence is RRVRKNQNASASRSGGLEDSAHLTEQVHTTNKPVNKGPKKSRRGGHLESSQHVQTQSSA. Residues 247-258 are compositionally biased toward polar residues; sequence ESSQHVQTQSSA.

The protein belongs to the protein-tyrosine phosphatase family. Non-receptor class dual specificity subfamily. As to quaternary structure, monomer. May interact with SFRS7 and SFRS9/SRP30C.

Its subcellular location is the nucleus. The protein localises to the nucleus speckle. Functionally, possesses RNA 5'-triphosphatase and diphosphatase activities, but displays a poor protein-tyrosine phosphatase activity. In addition, has phosphatase activity with ATP, ADP and O-methylfluorescein phosphate (in vitro). Binds to RNA. May participate in nuclear mRNA metabolism. This is RNA/RNP complex-1-interacting phosphatase (Dusp11) from Rattus norvegicus (Rat).